The primary structure comprises 350 residues: GTPase Obg (350 aa).

The 159-residue stretch at 1-159 (MKLVDEAEIL…RLLKLELRLL (159 aa)) folds into the Obg domain. Residues 127 to 146 (NMHFKSSVNRAPRQSTTGEE) are disordered. The span at 130-143 (FKSSVNRAPRQSTT) shows a compositional bias: polar residues. The 178-residue stretch at 160-337 (ADVGLLGFPN…IMKDVMAFFD (178 aa)) folds into the OBG-type G domain. Residues 166 to 173 (GFPNAGKS), 191 to 195 (FTTLY), 213 to 216 (DVPG), 287 to 290 (NKAD), and 318 to 320 (SAL) each bind GTP. Residues Ser-173 and Thr-193 each coordinate Mg(2+).

Belongs to the TRAFAC class OBG-HflX-like GTPase superfamily. OBG GTPase family. As to quaternary structure, monomer. Mg(2+) serves as cofactor.

The protein resides in the cytoplasm. Functionally, an essential GTPase which binds GTP, GDP and possibly (p)ppGpp with moderate affinity, with high nucleotide exchange rates and a fairly low GTP hydrolysis rate. Plays a role in control of the cell cycle, stress response, ribosome biogenesis and in those bacteria that undergo differentiation, in morphogenesis control. In Xanthomonas oryzae pv. oryzae (strain MAFF 311018), this protein is GTPase Obg.